An 86-amino-acid polypeptide reads, in one-letter code: Putative defensin-like protein 234 (86 aa).

The first 26 residues, 1–26 (MRSATLLLVSCVLLSFILGNVKEVEA), serve as a signal peptide directing secretion. 4 cysteine pairs are disulfide-bonded: Cys-34–Cys-86, Cys-44–Cys-71, Cys-52–Cys-80, and Cys-69–Cys-82.

The protein belongs to the DEFL family.

The protein resides in the secreted. The polypeptide is Putative defensin-like protein 234 (SCRL14) (Arabidopsis thaliana (Mouse-ear cress)).